The following is a 33-amino-acid chain: RPFRKHGAVPLSTYMRIYKKGDIVDIKGMGTIQ.

The protein belongs to the eukaryotic ribosomal protein eL21 family. Component of the large ribosomal subunit.

Its subcellular location is the cytoplasm. It is found in the cytosol. It localises to the endoplasmic reticulum. Component of the large ribosomal subunit. The ribosome is a large ribonucleoprotein complex responsible for the synthesis of proteins in the cell. The polypeptide is Large ribosomal subunit protein eL21 (rpl21) (Xenopus laevis (African clawed frog)).